The sequence spans 466 residues: MEDVLATAEGVVLVKLVKVAQKLGLKGENGTWKEFLDFYDKQLGSSSLSDPSKRRKDDLVAFLTTLKKKEDLQLLAKSLKLDNDVFEKFKKKSLDETAEQRLVRMTLTHDEYPLDYLFPSNAEDWVRTGLGKKKMEPTKIEMIAIDCEMVLCEDGSEAVVRVAAVDRDLKVILDEFVKPNQPVVDYRTFITGLTAQDLEKATISVVDIQEKLLMFISEDTILVGQSLNHDLKVLKVDHARVIDTSLVFKYNYDGTRRPLRLKRPSLNYLCKCILGYEVQKEGVPHNCVHDAEAAMKLVLAILDNGAETSVPLSKEMLEAEKSKLYLHRIPCNVPYEELNGVVSRDIPHEVKPSKKQDRHYYSAIVVFKSPEEANQAFENIAGDFGKDSRGLSQKQIFLEPSSSEPRLYVLVRKMVEDDLVGEVIAEENNASSKKRKRENHSKGTRDRRRCKPLSRRKQRSNVKRRR.

An Exonuclease domain is found at 142 to 298; it reads MIAIDCEMVL…HDAEAAMKLV (157 aa). The tract at residues 426 to 466 is disordered; sequence EENNASSKKRKRENHSKGTRDRRRCKPLSRRKQRSNVKRRR. The segment covering 445-466 has biased composition (basic residues); the sequence is RDRRRCKPLSRRKQRSNVKRRR.

This sequence belongs to the REXO1/REXO3 family.

It localises to the nucleus. Functionally, 3'-5' exonuclease degrading single-stranded small RNAs. In Arabidopsis thaliana (Mouse-ear cress), this protein is Small RNA degrading nuclease 2 (SDN2).